A 57-amino-acid polypeptide reads, in one-letter code: Probable mRNA interferase HicA 1 (57 aa).

This sequence belongs to the HicA mRNA interferase family. In terms of assembly, probably forms a complex with the cognate antitoxin HicB 1 which inhibits the mRNA interferase activity.

In terms of biological role, toxic component of a type II toxin-antitoxin (TA) system. A probable translation-independent mRNA interferase. The chain is Probable mRNA interferase HicA 1 (hicA1) from Photorhabdus laumondii subsp. laumondii (strain DSM 15139 / CIP 105565 / TT01) (Photorhabdus luminescens subsp. laumondii).